We begin with the raw amino-acid sequence, 546 residues long: MNKRAMLGAIGLAFGLMAWPFGASAKEKSMVWNEQWKTPSFVSGSLLKGEDAPEELVYRYLDQEKNTFQLGGQARERLSLIGKQTDELGHTVMRFEQRYRGIPVYGAVLVAHVNDGELSSLSGTLIPNLDKRTLKTEAAISIQQAEMIAKQDVADAVTKERPAAEEGKPTRLVIYPDGETPRLAYEVNVRFLTPVPGNWIYMIDAADGKVLNKWNQMDEAKPGGGQPVAGTSTVGVGRGVLGDQKYINTTYSSYYGYYYLQDNTRGSGIFTYDGRNRTVLPGSLWADGDNQFFASYDAAAVDAHYYAGVVYDYYKNVHGRLSYDGSNAAIRSTVHYGRGYNNAFWNGSQMVYGDGDGQTFLPFSGGIDVVGHELTHAVTDYTAGLVYQNESGAINEAMSDIFGTLVEFYANRNPDWEIGEDIYTPGIAGDALRSMSDPAKYGDPDHYSKRYTGTQDNGGVHTNSGIINKAAYLLSQGGVHYGVSVTGIGRDKMGKIFYRALVYYLTPTSNFSQLRAACVQAAADLYGSTSQEVNSVKQAFNAVGVY.

Positions 1-25 (MNKRAMLGAIGLAFGLMAWPFGASA) are cleaved as a signal peptide. A propeptide spans 26 to 228 (KEKSMVWNEQ…EAKPGGGQPV (203 aa)) (activation peptide). 4 residues coordinate Ca(2+): Asp-287, Asp-289, Gln-291, and Asp-368. His-372 serves as a coordination point for Zn(2+). Residue Glu-373 is part of the active site. 2 residues coordinate Zn(2+): His-376 and Glu-396. 9 residues coordinate Ca(2+): Glu-407, Asn-413, Asp-415, Glu-417, Glu-420, Tyr-423, Thr-424, Ile-427, and Asp-430. His-461 serves as the catalytic Proton donor.

Belongs to the peptidase M4 family. Ca(2+) is required as a cofactor. It depends on Zn(2+) as a cofactor.

It is found in the secreted. The catalysed reaction is Preferential cleavage: Xaa-|-Leu &gt; Xaa-|-Phe.. Extracellular zinc metalloprotease. This chain is Thermolysin, found in Alicyclobacillus acidocaldarius subsp. acidocaldarius (Bacillus acidocaldarius).